Consider the following 499-residue polypeptide: Alpha-amylase B (499 aa).

Residues 1–21 form the signal peptide; the sequence is MMVAWWSLFLYGLQVAAPALA. Cys51 and Cys59 form a disulfide bridge. Residues Gln56 and Trp104 each coordinate substrate. Residue Asn142 participates in Ca(2+) binding. Residue His143 participates in substrate binding. An intrachain disulfide couples Cys171 to Cys185. Residues Glu183 and Asp196 each contribute to the Ca(2+) site. The N-linked (GlcNAc...) asparagine glycan is linked to Asn218. Arg225 is a binding site for substrate. 3 residues coordinate Ca(2+): Asp227, His231, and Glu251. The Nucleophile role is filled by Asp227. 230–231 contacts substrate; sequence KH. Catalysis depends on Glu251, which acts as the Proton donor. Gly255 lines the substrate pocket. Cysteines 261 and 304 form a disulfide. The substrate site is built by Asp318 and Arg365. The cysteines at positions 461 and 496 are disulfide-linked.

Belongs to the glycosyl hydrolase 13 family. It depends on Ca(2+) as a cofactor.

It catalyses the reaction Endohydrolysis of (1-&gt;4)-alpha-D-glucosidic linkages in polysaccharides containing three or more (1-&gt;4)-alpha-linked D-glucose units.. In Aspergillus awamori (Black koji mold), this protein is Alpha-amylase B (amyB).